Reading from the N-terminus, the 372-residue chain is DNA replication and repair protein RecF (372 aa).

30–37 (GENGQGKT) contributes to the ATP binding site.

The protein belongs to the RecF family.

The protein resides in the cytoplasm. Its function is as follows. The RecF protein is involved in DNA metabolism; it is required for DNA replication and normal SOS inducibility. RecF binds preferentially to single-stranded, linear DNA. It also seems to bind ATP. This Anaeromyxobacter dehalogenans (strain 2CP-C) protein is DNA replication and repair protein RecF.